The chain runs to 208 residues: RNA chaperone ProQ (208 aa).

The segment covering 106 to 127 (SKAKVATRRKEQAKKAREEAKA) has biased composition (basic and acidic residues). Residues 106–154 (SKAKVATRRKEQAKKAREEAKAKKTARAATPPKRRPQPAAKKVEQPVET) form a disordered region.

Belongs to the ProQ family.

It localises to the cytoplasm. In terms of biological role, RNA chaperone with significant RNA binding, RNA strand exchange and RNA duplexing activities. In Aliivibrio fischeri (strain ATCC 700601 / ES114) (Vibrio fischeri), this protein is RNA chaperone ProQ.